Consider the following 376-residue polypeptide: Probable dual-specificity RNA methyltransferase RlmN (376 aa).

The segment at 1–25 is disordered; sequence MSDSERTSLPLVFDEPRGRKKPPRH. Residue Glu113 is the Proton acceptor of the active site. The region spanning 119–362 is the Radical SAM core domain; it reads YPDRATMCVS…PTTVRDTRGR (244 aa). Cys126 and Cys368 are disulfide-bonded. Cys133, Cys137, and Cys140 together coordinate [4Fe-4S] cluster. Residues 188 to 189, Ser222, 245 to 247, and Asn325 contribute to the S-adenosyl-L-methionine site; these read GE and SLH. Catalysis depends on Cys368, which acts as the S-methylcysteine intermediate.

This sequence belongs to the radical SAM superfamily. RlmN family. [4Fe-4S] cluster is required as a cofactor.

The protein resides in the cytoplasm. The catalysed reaction is adenosine(2503) in 23S rRNA + 2 reduced [2Fe-2S]-[ferredoxin] + 2 S-adenosyl-L-methionine = 2-methyladenosine(2503) in 23S rRNA + 5'-deoxyadenosine + L-methionine + 2 oxidized [2Fe-2S]-[ferredoxin] + S-adenosyl-L-homocysteine. The enzyme catalyses adenosine(37) in tRNA + 2 reduced [2Fe-2S]-[ferredoxin] + 2 S-adenosyl-L-methionine = 2-methyladenosine(37) in tRNA + 5'-deoxyadenosine + L-methionine + 2 oxidized [2Fe-2S]-[ferredoxin] + S-adenosyl-L-homocysteine. In terms of biological role, specifically methylates position 2 of adenine 2503 in 23S rRNA and position 2 of adenine 37 in tRNAs. The protein is Probable dual-specificity RNA methyltransferase RlmN of Nocardioides sp. (strain ATCC BAA-499 / JS614).